A 354-amino-acid polypeptide reads, in one-letter code: Protein Wnt-11 (354 aa).

A signal peptide spans 1–24; sequence MKPSPQFLLAAFLSLILQTGICYG. Asparagine 40 and asparagine 90 each carry an N-linked (GlcNAc...) asparagine glycan. Intrachain disulfides connect cysteine 80–cysteine 91, cysteine 130–cysteine 138, cysteine 140–cysteine 157, cysteine 209–cysteine 223, cysteine 211–cysteine 218, cysteine 283–cysteine 314, cysteine 299–cysteine 309, cysteine 313–cysteine 353, cysteine 329–cysteine 344, cysteine 331–cysteine 341, and cysteine 336–cysteine 337. The O-palmitoleoyl serine; by PORCN moiety is linked to residue serine 215. N-linked (GlcNAc...) asparagine glycosylation is found at asparagine 300 and asparagine 304.

It belongs to the Wnt family. In terms of processing, palmitoleoylation is required for efficient binding to frizzled receptors. Depalmitoleoylation leads to Wnt signaling pathway inhibition.

The protein localises to the secreted. It localises to the extracellular space. The protein resides in the extracellular matrix. Its function is as follows. Ligand for members of the frizzled family of seven transmembrane receptors. May play a role in the formation of dermal structure, both limb and feather buds. Is likely to signal over only few cell diameters. This is Protein Wnt-11 (WNT11) from Coturnix japonica (Japanese quail).